The primary structure comprises 145 residues: 3-hydroxyacyl-[acyl-carrier-protein] dehydratase FabZ (145 aa).

H49 is a catalytic residue.

Belongs to the thioester dehydratase family. FabZ subfamily.

It localises to the cytoplasm. The catalysed reaction is a (3R)-hydroxyacyl-[ACP] = a (2E)-enoyl-[ACP] + H2O. In terms of biological role, involved in unsaturated fatty acids biosynthesis. Catalyzes the dehydration of short chain beta-hydroxyacyl-ACPs and long chain saturated and unsaturated beta-hydroxyacyl-ACPs. The sequence is that of 3-hydroxyacyl-[acyl-carrier-protein] dehydratase FabZ from Rickettsia akari (strain Hartford).